Reading from the N-terminus, the 1107-residue chain is MAAVSFDEKVLAAKKIICDIEGTTSSISFVKDVLFPYALKHVEEYLKNHWSEDATKTVVAALREQADEDKKAEVEGVVTIPAGDSEDIIPDVVKNVEWQMSQDRKTGALKTLQGLVWAKGYKDGTIKGHVYEDVKKALEQWNESGRKVYIYSSGSVDAQKLLFEHSEQGDLIKYVAGYYDTKIGAKQEKNSYEAILKNIEATGEEALFLTDVVAEAKAAKDAGLNVVVLDRPGNAELSEEDRKEFTVISSFTDLPIESVKSTETENGAEKETVTESTEKVADESEKETETETAAAETENGAEAENGASKRKIDETAQDDEAQRPSKVVKVDQNGDSPAVDGAKQNGDSAEEPATLSETNGKSTGEDAMDVDAEMTDVESSSTTKAAEAGTGKVTEKTETEESPKEKETEMEAEAEVSKTDEKEDTKQQGESVTDGEDKKGDVINKNAEDDIKVEEEKNKEEESAPPTKKAKIEEDKMDVDEEDSAVIEKKADNVDEKPVESTTDEVAKKEENLVETPVDTAKPEVTTSEIAVTDETKEAPSDAAKEESVTSTSKTEEEKSDDLVPTTTSEQTVEKSSAEKTESKSEEETDSGTSEKKVEDKSANNEEEQKEPKESVVAEKKEEEIKVKTADEETKSMETDEVTVEKSNTKEVKDDNEQIPDSKADQDFNAKEAAKETVSEELEVKADAIVPADESKPKAQNDETKEKVTKAEEVTKTAETKTEEEEAKKTEEDAKKTEEDAKKTEKEVKKTDEEMPTEEIKMKDEPTVPEKSKSVDEPMATEESVATKEETLAEETSATTEAQATKEDEKPVDTKTNENDKTTPEVKATEEKTDDAKSTEVATATEEDKEMKEANSAEESVETKEKKTEETHTTDEDKPKESDVAKPDVVEKQEEKMETSEQVDETKGVEATTAGPVEEVAVEATEEDVAMEAESSDAVKEETKTEEPKSKVDKLDSEAMEVDSASTSQNEAKNESVKPAETAAVEESKTESDVVSTTSTDEVKENGTSEKVNTKEESRVPENGEADSKVTTNGNHDEKADSDKENDTSASNIEEASSATTTTTNGTSTESDSSSTTPSSETVAEIKSKKATDAVADSATPSVETES.

Residues Asp-19 and Glu-21 each coordinate Mg(2+). Residues 152-153 (SS) and Lys-186 each bind substrate. Asp-211 contributes to the Mg(2+) binding site. The segment at 258–1107 (SVKSTETENG…SATPSVETES (850 aa)) is disordered. A compositionally biased stretch (basic and acidic residues) spans 260-289 (KSTETENGAEKETVTESTEKVADESEKETE). Low complexity predominate over residues 291-306 (ETAAAETENGAEAENG). Acidic residues predominate over residues 366 to 376 (DAMDVDAEMTD). Composition is skewed to basic and acidic residues over residues 393–427 (VTEK…DTKQ) and 435–462 (GEDK…KEEE). Residues 475-485 (DKMDVDEEDSA) show a composition bias toward acidic residues. Basic and acidic residues-rich tracts occupy residues 486–512 (VIEK…KEEN), 534–548 (DETK…KEES), 572–586 (TVEK…SKSE), 593–604 (TSEKKVEDKSAN), 610–686 (KEPK…EVKA), and 693–776 (DESK…KSVD). The segment covering 794-803 (EETSATTEAQ) has biased composition (low complexity). 2 stretches are compositionally biased toward basic and acidic residues: residues 804-838 (ATKE…DAKS) and 849-908 (KEMK…ETKG). Positions 909–919 (VEATTAGPVEE) are enriched in low complexity. Over residues 920 to 935 (VAVEATEEDVAMEAES) the composition is skewed to acidic residues. 3 stretches are compositionally biased toward basic and acidic residues: residues 937 to 957 (DAVK…KLDS), 1001 to 1028 (DEVK…EADS), and 1035 to 1047 (NHDE…KEND). Positions 1048–1083 (TSASNIEEASSATTTTTNGTSTESDSSSTTPSSETV) are enriched in low complexity.

Belongs to the HAD-like hydrolase superfamily. MasA/MtnC family. In terms of assembly, monomer. Mg(2+) is required as a cofactor.

Its subcellular location is the cytoplasm. The protein localises to the nucleus. It carries out the reaction 5-methylsulfanyl-2,3-dioxopentyl phosphate + H2O = 1,2-dihydroxy-5-(methylsulfanyl)pent-1-en-3-one + phosphate. Its pathway is amino-acid biosynthesis; L-methionine biosynthesis via salvage pathway; L-methionine from S-methyl-5-thio-alpha-D-ribose 1-phosphate: step 3/6. It functions in the pathway amino-acid biosynthesis; L-methionine biosynthesis via salvage pathway; L-methionine from S-methyl-5-thio-alpha-D-ribose 1-phosphate: step 4/6. Functionally, bifunctional enzyme that catalyzes the enolization of 2,3-diketo-5-methylthiopentyl-1-phosphate (DK-MTP-1-P) into the intermediate 2-hydroxy-3-keto-5-methylthiopentenyl-1-phosphate (HK-MTPenyl-1-P), which is then dephosphorylated to form the acireductone 1,2-dihydroxy-3-keto-5-methylthiopentene (DHK-MTPene). The protein is Enolase-phosphatase E1 of Aedes aegypti (Yellowfever mosquito).